Reading from the N-terminus, the 475-residue chain is Kynureninase (475 aa).

Pyridoxal 5'-phosphate-binding positions include L141, T142, 169–172, D254, H257, and Y279; that span reads FPSD. K280 is subject to N6-(pyridoxal phosphate)lysine. Pyridoxal 5'-phosphate contacts are provided by W319 and N347.

It belongs to the kynureninase family. Homodimer. Pyridoxal 5'-phosphate serves as cofactor.

Its subcellular location is the cytoplasm. It catalyses the reaction L-kynurenine + H2O = anthranilate + L-alanine + H(+). The catalysed reaction is 3-hydroxy-L-kynurenine + H2O = 3-hydroxyanthranilate + L-alanine + H(+). It functions in the pathway amino-acid degradation; L-kynurenine degradation; L-alanine and anthranilate from L-kynurenine: step 1/1. Its pathway is cofactor biosynthesis; NAD(+) biosynthesis; quinolinate from L-kynurenine: step 2/3. In terms of biological role, catalyzes the cleavage of L-kynurenine (L-Kyn) and L-3-hydroxykynurenine (L-3OHKyn) into anthranilic acid (AA) and 3-hydroxyanthranilic acid (3-OHAA), respectively. The protein is Kynureninase (bna5) of Sclerotinia sclerotiorum (strain ATCC 18683 / 1980 / Ss-1) (White mold).